The chain runs to 224 residues: uncharacterized protein (224 aa).

An N-terminal signal peptide occupies residues 1-21; sequence MKRTSRSLTAALLGIAALLAG. A lipid anchor (N-palmitoyl cysteine) is attached at C22. A lipid anchor (S-diacylglycerol cysteine) is attached at C22.

The protein to M.bovis LprP.

It is found in the cell membrane. This is an uncharacterized protein from Mycobacterium tuberculosis (strain ATCC 25618 / H37Rv).